The primary structure comprises 549 residues: Cation/acetate symporter ActP (549 aa).

Helical transmembrane passes span 32-54 (IQAIIMFVLFVGFTLYITYWASK), 75-97 (GMAIAGDFMSAASFLGISALVYT), 102-124 (GLIYSIGFLIGWPIILFLIAERL), 145-167 (IRILSAIGSLFVVALYLIAQMVG), 182-204 (VAVVLVGILMVLYVLFGGMLATT), 211-233 (AILLLAGATFMALMVMKIVNFNF), 263-285 (ALSLGLALMFGTAGLPHIIMRFF), 298-320 (FYATGFIGYFYILTFIIGFGAIL), 361-383 (AVAFATILAVVAGLTLAGASAVS), 404-423 (VSKITVVILGFIAIGLGILF), 428-450 (IAFMVGLAFSIAASCNFPIILLS), 462-484 (LVGGWLGLITAVVLMILGPTIWV), and 494-516 (YPYEYPALFSMIIAFIGSWLFSI).

It belongs to the sodium:solute symporter (SSF) (TC 2.A.21) family.

The protein localises to the cell inner membrane. Functionally, transports acetate. This chain is Cation/acetate symporter ActP, found in Photorhabdus laumondii subsp. laumondii (strain DSM 15139 / CIP 105565 / TT01) (Photorhabdus luminescens subsp. laumondii).